The following is a 142-amino-acid chain: Large ribosomal subunit protein uL13 (142 aa).

It belongs to the universal ribosomal protein uL13 family. In terms of assembly, part of the 50S ribosomal subunit.

This protein is one of the early assembly proteins of the 50S ribosomal subunit, although it is not seen to bind rRNA by itself. It is important during the early stages of 50S assembly. This Ralstonia pickettii (strain 12J) protein is Large ribosomal subunit protein uL13.